The chain runs to 402 residues: Caspase-1 (402 aa).

The region spanning 1–91 (MADKVLRAKR…YLAEILELQS (91 aa)) is the CARD domain. Positions 1–118 (MADKVLRAKR…PFSSETKEKL (118 aa)) are excised as a propeptide. Catalysis depends on residues H236 and C284. A propeptide spanning residues 297 to 314 (SVGNSEEGFLTDAIFEDD) is cleaved from the precursor. The residue at position 301 (S301) is a Phosphoserine.

It belongs to the peptidase C14A family. Heterotetramer that consists of two anti-parallel arranged heterodimers, each one formed by a 20 kDa (Caspase-1 subunit p20) and a 10 kDa (Caspase-1 subunit p10) subunit. May be a component of the inflammasome, a protein complex which also includes PYCARD, CARD8 and NLRP2 and whose function would be the activation of pro-inflammatory caspases. Component of the AIM2 PANoptosome complex, a multiprotein complex that drives inflammatory cell death (PANoptosis). Both the p10 and p20 subunits interact with MEFV. Interacts with CARD17P/INCA and CARD18. Interacts with SERPINB1; this interaction regulates CASP1 activity. In terms of assembly, heterotetramer that consists of two anti-parallel arranged heterodimers, each one formed by a 20 kDa (Caspase-1 subunit p20) and a 10 kDa (Caspase-1 subunit p10) subunit. Post-translationally, the two subunits are derived from the precursor sequence by an autocatalytic mechanism. Ubiquitinated via 'Lys-11'-linked polyubiquitination. Deubiquitinated by USP8.

The protein resides in the cytoplasm. It is found in the cell membrane. The catalysed reaction is Strict requirement for an Asp residue at position P1 and has a preferred cleavage sequence of Tyr-Val-Ala-Asp-|-.. In terms of biological role, thiol protease involved in a variety of inflammatory processes by proteolytically cleaving other proteins, such as the precursors of the inflammatory cytokines interleukin-1 beta (IL1B) and interleukin 18 (IL18) as well as the pyroptosis inducer Gasdermin-D (GSDMD), into active mature peptides. Plays a key role in cell immunity as an inflammatory response initiator: once activated through formation of an inflammasome complex, it initiates a pro-inflammatory response through the cleavage of the two inflammatory cytokines IL1B and IL18, releasing the mature cytokines which are involved in a variety of inflammatory processes. Cleaves a tetrapeptide after an Asp residue at position P1. Also initiates pyroptosis, a programmed lytic cell death pathway, through cleavage of GSDMD. In contrast to cleavage of interleukin IL1B, recognition and cleavage of GSDMD is not strictly dependent on the consensus cleavage site but depends on an exosite interface on CASP1 that recognizes and binds the Gasdermin-D, C-terminal (GSDMD-CT) part. Cleaves and activates CASP7 in response to bacterial infection, promoting plasma membrane repair. Upon inflammasome activation, during DNA virus infection but not RNA virus challenge, controls antiviral immunity through the cleavage of CGAS, rendering it inactive. In apoptotic cells, cleaves SPHK2 which is released from cells and remains enzymatically active extracellularly. The sequence is that of Caspase-1 (Casp1) from Rattus norvegicus (Rat).